Here is a 241-residue protein sequence, read N- to C-terminus: 2-heptyl-1-hydroxyquinolin-4(1H)-one methyltransferase (241 aa).

This sequence belongs to the methyltransferase superfamily. Monomer.

The protein resides in the cytoplasm. The enzyme catalyses 2-heptyl-1-hydroxy-4(1H)-quinolinone + S-adenosyl-L-methionine = 2-heptyl-1-methoxy-4(1H)-quinolinone + S-adenosyl-L-homocysteine + H(+). Its function is as follows. Involved in cellular response to chemical stress and may contribute to resistance toward antimicrobial natural compounds as well as drugs. Catalyzes the methylation and detoxification of the P.aeruginosa toxin 2-heptyl-1-hydroxy-4(1H)-quinolinone (HQNO) to 2-heptyl-1-methoxy-4(1H)-quinolinone (HMOQ). This is 2-heptyl-1-hydroxyquinolin-4(1H)-one methyltransferase from Mycobacterium bovis (strain BCG / Pasteur 1173P2).